We begin with the raw amino-acid sequence, 642 residues long: Threonine--tRNA ligase (642 aa).

The region spanning 1-61 is the TGS domain; that stretch reads MPVITLPDGS…ESDAQLAIIT (61 aa). The segment at 243–534 is catalytic; it reads DHRKIGKQLD…LTEEYAGFFP (292 aa). 3 residues coordinate Zn(2+): cysteine 334, histidine 385, and histidine 511.

The protein belongs to the class-II aminoacyl-tRNA synthetase family. Homodimer. Requires Zn(2+) as cofactor.

The protein localises to the cytoplasm. The enzyme catalyses tRNA(Thr) + L-threonine + ATP = L-threonyl-tRNA(Thr) + AMP + diphosphate + H(+). Its function is as follows. Catalyzes the attachment of threonine to tRNA(Thr) in a two-step reaction: L-threonine is first activated by ATP to form Thr-AMP and then transferred to the acceptor end of tRNA(Thr). Also edits incorrectly charged L-seryl-tRNA(Thr). The protein is Threonine--tRNA ligase of Yersinia pseudotuberculosis serotype O:1b (strain IP 31758).